The following is a 101-amino-acid chain: Small ribosomal subunit protein uS14 (101 aa).

The protein belongs to the universal ribosomal protein uS14 family. Part of the 30S ribosomal subunit. Contacts proteins S3 and S10.

Binds 16S rRNA, required for the assembly of 30S particles and may also be responsible for determining the conformation of the 16S rRNA at the A site. This is Small ribosomal subunit protein uS14 from Synechococcus sp. (strain JA-2-3B'a(2-13)) (Cyanobacteria bacterium Yellowstone B-Prime).